Consider the following 307-residue polypeptide: Porphobilinogen deaminase (307 aa).

Cys-239 is subject to S-(dipyrrolylmethanemethyl)cysteine.

This sequence belongs to the HMBS family. In terms of assembly, monomer. Dipyrromethane is required as a cofactor.

The catalysed reaction is 4 porphobilinogen + H2O = hydroxymethylbilane + 4 NH4(+). Its pathway is porphyrin-containing compound metabolism; protoporphyrin-IX biosynthesis; coproporphyrinogen-III from 5-aminolevulinate: step 2/4. Functionally, tetrapolymerization of the monopyrrole PBG into the hydroxymethylbilane pre-uroporphyrinogen in several discrete steps. The sequence is that of Porphobilinogen deaminase from Campylobacter jejuni subsp. jejuni serotype O:6 (strain 81116 / NCTC 11828).